The chain runs to 509 residues: Cytochrome P450 4A10 (509 aa).

2 helical membrane passes run 11–31 and 121–141; these read FTGS…LLLL and LLAP…WFQH. Residue E320 participates in heme binding. At S439 the chain carries Phosphoserine. Residue C456 coordinates heme.

The protein belongs to the cytochrome P450 family. Requires heme as cofactor. In terms of tissue distribution, expressed in liver (at protein level) and kidney (at protein level).

It is found in the endoplasmic reticulum membrane. The protein localises to the microsome membrane. It carries out the reaction an omega-methyl-long-chain fatty acid + reduced [NADPH--hemoprotein reductase] + O2 = an omega-hydroxy-long-chain fatty acid + oxidized [NADPH--hemoprotein reductase] + H2O + H(+). The enzyme catalyses dodecanoate + reduced [NADPH--hemoprotein reductase] + O2 = 12-hydroxydodecanoate + oxidized [NADPH--hemoprotein reductase] + H2O + H(+). The catalysed reaction is dodecanoate + reduced [NADPH--hemoprotein reductase] + O2 = 11-hydroxydodecanoate + oxidized [NADPH--hemoprotein reductase] + H2O + H(+). It catalyses the reaction tetradecanoate + reduced [NADPH--hemoprotein reductase] + O2 = 14-hydroxytetradecanoate + oxidized [NADPH--hemoprotein reductase] + H2O + H(+). It carries out the reaction hexadecanoate + reduced [NADPH--hemoprotein reductase] + O2 = 16-hydroxyhexadecanoate + oxidized [NADPH--hemoprotein reductase] + H2O + H(+). The enzyme catalyses (9Z)-octadecenoate + reduced [NADPH--hemoprotein reductase] + O2 = 18-hydroxy-(9Z)-octadecenoate + oxidized [NADPH--hemoprotein reductase] + H2O + H(+). The catalysed reaction is (9Z,12Z)-octadecadienoate + reduced [NADPH--hemoprotein reductase] + O2 = 18-hydroxy-(9Z,12Z)-octadecadienoate + oxidized [NADPH--hemoprotein reductase] + H2O + H(+). It catalyses the reaction (9Z,12Z)-octadecadienoate + reduced [NADPH--hemoprotein reductase] + O2 = 17-hydroxy-(9Z,12Z)-octadecadienoate + oxidized [NADPH--hemoprotein reductase] + H2O + H(+). It carries out the reaction (5Z,8Z,11Z,14Z)-eicosatetraenoate + reduced [NADPH--hemoprotein reductase] + O2 = 20-hydroxy-(5Z,8Z,11Z,14Z)-eicosatetraenoate + oxidized [NADPH--hemoprotein reductase] + H2O + H(+). The enzyme catalyses 8,9-epoxy-(5Z,11Z,14Z)-eicosatrienoate + reduced [NADPH--hemoprotein reductase] + O2 = 20-hydroxy-8,9-epoxy-(5Z,11Z,14Z)-eicosatrienoate + oxidized [NADPH--hemoprotein reductase] + H2O + H(+). Its function is as follows. A cytochrome P450 monooxygenase involved in the metabolism of fatty acids. Catalyzes predominantly the oxidation of the terminal carbon (omega-oxidation) of long-chain fatty acids. Acts as a major omega-hydroxylase for dodecanoic (lauric) acid in liver. In kidney, may play an important role in omega-hydroxylation of (5Z,8Z,11Z,14Z)-eicosatetraenoic acid (arachidonate) to 20-hydroxyeicosatetraenoic acid (20-HETE), a signaling molecule acting both as vasoconstrictive and natriuretic with overall effect on arterial blood pressure. Also participates in the formation of anti-inflammatory hydroxyepoxyeicosatrienoic acids (HEETs) in kidney by converting 8,9-epoxyeicosatrienoic acid (EET) to 20,8,9-HEET, an activator of PPARA. Displays substantially lower fatty acid omega-1 hydroxylase activity. Mechanistically, uses molecular oxygen inserting one oxygen atom into a substrate, and reducing the second into a water molecule, with two electrons provided by NADPH via cytochrome P450 reductase (CPR; NADPH-ferrihemoprotein reductase). This chain is Cytochrome P450 4A10 (Cyp4a10), found in Rattus norvegicus (Rat).